A 195-amino-acid polypeptide reads, in one-letter code: ATP-dependent Clp protease proteolytic subunit (195 aa).

S101 acts as the Nucleophile in catalysis. H126 is an active-site residue.

This sequence belongs to the peptidase S14 family. In terms of assembly, component of the chloroplastic Clp protease core complex.

The protein resides in the plastid. It localises to the chloroplast stroma. The enzyme catalyses Hydrolysis of proteins to small peptides in the presence of ATP and magnesium. alpha-casein is the usual test substrate. In the absence of ATP, only oligopeptides shorter than five residues are hydrolyzed (such as succinyl-Leu-Tyr-|-NHMec, and Leu-Tyr-Leu-|-Tyr-Trp, in which cleavage of the -Tyr-|-Leu- and -Tyr-|-Trp bonds also occurs).. In terms of biological role, cleaves peptides in various proteins in a process that requires ATP hydrolysis. Has a chymotrypsin-like activity. Plays a major role in the degradation of misfolded proteins. This Oltmannsiellopsis viridis (Marine flagellate) protein is ATP-dependent Clp protease proteolytic subunit.